Reading from the N-terminus, the 470-residue chain is Methylenetetrahydrofolate--tRNA-(uracil-5-)-methyltransferase TrmFO (470 aa).

10 to 15 (GAGLAG) lines the FAD pocket.

The protein belongs to the MnmG family. TrmFO subfamily. The cofactor is FAD.

Its subcellular location is the cytoplasm. The enzyme catalyses uridine(54) in tRNA + (6R)-5,10-methylene-5,6,7,8-tetrahydrofolate + NADH + H(+) = 5-methyluridine(54) in tRNA + (6S)-5,6,7,8-tetrahydrofolate + NAD(+). The catalysed reaction is uridine(54) in tRNA + (6R)-5,10-methylene-5,6,7,8-tetrahydrofolate + NADPH + H(+) = 5-methyluridine(54) in tRNA + (6S)-5,6,7,8-tetrahydrofolate + NADP(+). Functionally, catalyzes the folate-dependent formation of 5-methyl-uridine at position 54 (M-5-U54) in all tRNAs. The chain is Methylenetetrahydrofolate--tRNA-(uracil-5-)-methyltransferase TrmFO from Prochlorococcus marinus (strain MIT 9215).